Consider the following 360-residue polypeptide: Photosystem II protein D1 (360 aa).

3 helical membrane passes run 29–46, 118–133, and 142–156; these read YIGWFGVLMIPTLLTATS, HFFIGICAYMGREWEL, and WIAVAFSAPVAAATA. H118 lines the chlorophyll a pocket. Y126 lines the pheophytin a pocket. Residues D170 and E189 each contribute to the [CaMn4O5] cluster site. The chain crosses the membrane as a helical span at residues 197–218; sequence FHMMGVAGVFGGSLFSAMHGSL. H198 lines the chlorophyll a pocket. Residues H215 and 264 to 265 each bind a quinone; that span reads SF. Position 215 (H215) interacts with Fe cation. H272 is a binding site for Fe cation. Residues 274 to 288 form a helical membrane-spanning segment; it reads FLALWPVVCICVTAL. Residues H332, E333, D342, and A344 each coordinate [CaMn4O5] cluster. Residues 345–360 constitute a propeptide that is removed on maturation; the sequence is SEVSLPVALNKVEING.

Belongs to the reaction center PufL/M/PsbA/D family. PSII is composed of 1 copy each of membrane proteins PsbA, PsbB, PsbC, PsbD, PsbE, PsbF, PsbH, PsbI, PsbJ, PsbK, PsbL, PsbM, PsbT, PsbY, PsbZ, Psb30/Ycf12, at least 3 peripheral proteins of the oxygen-evolving complex and a large number of cofactors. It forms dimeric complexes. The D1/D2 heterodimer binds P680, chlorophylls that are the primary electron donor of PSII, and subsequent electron acceptors. It shares a non-heme iron and each subunit binds pheophytin, quinone, additional chlorophylls, carotenoids and lipids. D1 provides most of the ligands for the Mn4-Ca-O5 cluster of the oxygen-evolving complex (OEC). There is also a Cl(-1) ion associated with D1 and D2, which is required for oxygen evolution. The PSII complex binds additional chlorophylls, carotenoids and specific lipids. is required as a cofactor. Tyr-161 forms a radical intermediate that is referred to as redox-active TyrZ, YZ or Y-Z. In terms of processing, C-terminally processed by CTPA; processing is essential to allow assembly of the oxygen-evolving complex and thus photosynthetic growth.

It localises to the plastid. Its subcellular location is the chloroplast thylakoid membrane. It catalyses the reaction 2 a plastoquinone + 4 hnu + 2 H2O = 2 a plastoquinol + O2. Functionally, photosystem II (PSII) is a light-driven water:plastoquinone oxidoreductase that uses light energy to abstract electrons from H(2)O, generating O(2) and a proton gradient subsequently used for ATP formation. It consists of a core antenna complex that captures photons, and an electron transfer chain that converts photonic excitation into a charge separation. The D1/D2 (PsbA/PsbD) reaction center heterodimer binds P680, the primary electron donor of PSII as well as several subsequent electron acceptors. In Galdieria sulphuraria (Red alga), this protein is Photosystem II protein D1.